The following is a 542-amino-acid chain: Chaperonin GroEL (542 aa).

Residues 29–32 (TLGP), 86–90 (DGTTT), glycine 413, and aspartate 494 contribute to the ATP site.

This sequence belongs to the chaperonin (HSP60) family. Forms a cylinder of 14 subunits composed of two heptameric rings stacked back-to-back. Interacts with the co-chaperonin GroES.

It is found in the cytoplasm. The catalysed reaction is ATP + H2O + a folded polypeptide = ADP + phosphate + an unfolded polypeptide.. Together with its co-chaperonin GroES, plays an essential role in assisting protein folding. The GroEL-GroES system forms a nano-cage that allows encapsulation of the non-native substrate proteins and provides a physical environment optimized to promote and accelerate protein folding. This is Chaperonin GroEL from Endomicrobium trichonymphae.